The chain runs to 302 residues: Short-chain dehydrogenase/reductase 3 (302 aa).

The next 4 membrane-spanning stretches (helical) occupy residues 9-29, 170-190, 195-215, and 253-273; these read LVVF…GLVL, IVCL…DYCT, AFAF…VSAT, and AVQL…LIIL. Serine 175 contributes to the substrate binding site. Residue tyrosine 188 is the Proton acceptor of the active site.

The protein belongs to the short-chain dehydrogenases/reductases (SDR) family. As to expression, in the retina, expressed in cone but not rod outer segments.

The protein localises to the membrane. The catalysed reaction is all-trans-retinol + NADP(+) = all-trans-retinal + NADPH + H(+). Its function is as follows. Catalyzes the reduction of all-trans-retinal to all-trans-retinol in the presence of NADPH. The protein is Short-chain dehydrogenase/reductase 3 (DHRS3) of Bos taurus (Bovine).